The following is a 256-amino-acid chain: Enolase-phosphatase E1 (256 aa).

Asp-14 and Glu-16 together coordinate Mg(2+). Substrate is bound by residues 142 to 143 (SS) and Lys-176. Asp-201 contributes to the Mg(2+) binding site.

Belongs to the HAD-like hydrolase superfamily. MasA/MtnC family. Monomer. Mg(2+) is required as a cofactor.

Its subcellular location is the cytoplasm. It is found in the nucleus. The enzyme catalyses 5-methylsulfanyl-2,3-dioxopentyl phosphate + H2O = 1,2-dihydroxy-5-(methylsulfanyl)pent-1-en-3-one + phosphate. It participates in amino-acid biosynthesis; L-methionine biosynthesis via salvage pathway; L-methionine from S-methyl-5-thio-alpha-D-ribose 1-phosphate: step 3/6. It functions in the pathway amino-acid biosynthesis; L-methionine biosynthesis via salvage pathway; L-methionine from S-methyl-5-thio-alpha-D-ribose 1-phosphate: step 4/6. Functionally, bifunctional enzyme that catalyzes the enolization of 2,3-diketo-5-methylthiopentyl-1-phosphate (DK-MTP-1-P) into the intermediate 2-hydroxy-3-keto-5-methylthiopentenyl-1-phosphate (HK-MTPenyl-1-P), which is then dephosphorylated to form the acireductone 1,2-dihydroxy-3-keto-5-methylthiopentene (DHK-MTPene). The polypeptide is Enolase-phosphatase E1 (Drosophila yakuba (Fruit fly)).